The following is a 413-amino-acid chain: MNTLANWKKFLLVAVIICFLVPIMTKAEIAEADTSSELIVSEAKNLLGYQYKYGGETPKEGFDPSGLIQYVFSKADIHLPRSVNDQYKIGTAVKPENLKPGDILFFKKEGSTGTVPTHDALYIGDGQMVHSTQSKGVIITNYKKSSYWSGTYIGARRIAADPATADVPVVQEAEKYIGVPYVFGGSTPSEGFDCSGLVQYVFQQALGIYLPRSAEQQWAVGEKVAPQNIKPGDVVYFSNTYKTGISHAGIYAGAGRFIQASRSEKVTISYLSEDYWKSKMTGIRRFDNLTIPKENPIVSEATLYVGEVPYKQGGVTPETGFDTAGFVQYVYQKAAGISLPRYATSQYNAGTKIEKADLKPGDIVFFQSTSLNPSIYIGNGQVVHVTLSNGVTITNMNTSTYWKDKYAGSIRVQ.

Positions 1–32 (MNTLANWKKFLLVAVIICFLVPIMTKAEIAEA) are cleaved as a signal peptide. NlpC/P60 domains are found at residues 33-159 (DTSS…RRIA), 163-287 (ATAD…RRFD), and 291-413 (IPKE…IRVQ). The active-site Nucleophile is cysteine 194. Histidine 247 functions as the Proton acceptor in the catalytic mechanism. The active site involves glutamine 259.

It belongs to the peptidase C40 family.

Its subcellular location is the secreted. The protein localises to the cell wall. Its activity is regulated as follows. Inhibited by pretreatment with 1 mM 4-(hydroxymercuri)benzoate, a sulfhydryl inhibitor. Functionally, cleaves, in an endo-type manner, the gamma-glutamyl bond between D-glutamate and L-glutamate of poly-gamma-glutamate (PGA). In Bacillus subtilis (strain 168), this protein is Gamma-DL-glutamyl hydrolase (pgdS).